A 159-amino-acid polypeptide reads, in one-letter code: Probable minor fimbrial protein (159 aa).

The propeptide at 1 to 6 (MKKMHG) is leader sequence. An N-methylphenylalanine modification is found at F7. The helical transmembrane segment at 7–27 (FTLIELMIVVAIIGVLASTAL) threads the bilayer. Intrachain disulfides connect C56-C71 and C140-C153.

The protein belongs to the N-Me-Phe pilin family. As to quaternary structure, the pili are polar flexible filaments of about 5.4 nanometers diameter and 2.5 micrometers average length; they consist of only a single polypeptide chain arranged in a helical configuration of five subunits per turn in the assembled pilus.

Its subcellular location is the fimbrium. It localises to the membrane. This is Probable minor fimbrial protein (fimZ) from Dichelobacter nodosus (Bacteroides nodosus).